The primary structure comprises 628 residues: MEEFPCDVIRYEAYVYGVCEFRLPFFLPSRNFSIIAHIDHGKSTLADRLLELTGTIQKKQAGKNEQVLDKLKVERERGITGKSNHSMIDKFKGKDYLLNLIDTPGHVDFAWEVSRSLAACQGALLLVDASQGVQAQSISVFHNAKERGLKIIPILNKIDLPAAQPERIAAQMQATFGIDPSDILHISAKTGQGTQEVLEAIISRIPPPSGRIHAPLKAFLFDSFYDRYRGVISLINVQEGVLRKGDKISSCHTRKKYEITELGILHPEEVPTQSLNPGQVGYIACNMKQSSEAHIGDTLHRAGEPVEPMEGFQETKAMVFAGVFPVDNSDFPKLEESINRLTLTDRSVTIQRESSSALGQGCRLGFLGTLHMDVFRQRLEDEYDANIIITAPTVPYKVVYHDREVIISNPTEFPEVTDATARVKEIQEPVVKASIIVPEEYFGDLMELCYSHRAEDLDHRYLDSGAVSSRIMLNCILPLSEIVTDFFDQLKSRSSGFASFDYEDAGYRKSDLAKMSFLLNGKPVDALALIIHRSAQEAVGRQWVKKLHKVIPRQLYEVPIQAAIGKKVIARETLKAMRADVTAGLYGGHYERKMKHLENQKEGKRKMKKMGTIDLPQEAFFDILSNKS.

The 183-residue stretch at 27 to 209 folds into the tr-type G domain; the sequence is LPSRNFSIIA…AIISRIPPPS (183 aa). GTP is bound by residues 36–43, 102–106, and 156–159; these read AHIDHGKS, DTPGH, and NKID.

It belongs to the TRAFAC class translation factor GTPase superfamily. Classic translation factor GTPase family. LepA subfamily.

The protein resides in the mitochondrion inner membrane. The catalysed reaction is GTP + H2O = GDP + phosphate + H(+). In terms of biological role, promotes mitochondrial protein synthesis. May act as a fidelity factor of the translation reaction, by catalyzing a one-codon backward translocation of tRNAs on improperly translocated ribosomes. Binds to mitochondrial ribosomes in a GTP-dependent manner. The polypeptide is Translation factor GUF1, mitochondrial (Laccaria bicolor (strain S238N-H82 / ATCC MYA-4686) (Bicoloured deceiver)).